Here is a 211-residue protein sequence, read N- to C-terminus: MLTIALSKGRILDDTLPLLAEAGIVPTENPDKSRKLIIPTTQDDVRLLIVRATDVPTYVEHGAADLGVAGKDVLMEYGGQGLYEPLDLQIAQCKLMTAGVVGAAEPKGRLRVATKFVNVAKRYYAEQGRQVDIIKLYGSMELAPLINLADKIIDVVDTGNTLRANGLEPQELIATISSRLVVNKASMKMQHARIQSLIDTLRAAVESRHRG.

It belongs to the ATP phosphoribosyltransferase family. Short subfamily. In terms of assembly, heteromultimer composed of HisG and HisZ subunits.

Its subcellular location is the cytoplasm. It carries out the reaction 1-(5-phospho-beta-D-ribosyl)-ATP + diphosphate = 5-phospho-alpha-D-ribose 1-diphosphate + ATP. It functions in the pathway amino-acid biosynthesis; L-histidine biosynthesis; L-histidine from 5-phospho-alpha-D-ribose 1-diphosphate: step 1/9. Its function is as follows. Catalyzes the condensation of ATP and 5-phosphoribose 1-diphosphate to form N'-(5'-phosphoribosyl)-ATP (PR-ATP). Has a crucial role in the pathway because the rate of histidine biosynthesis seems to be controlled primarily by regulation of HisG enzymatic activity. The sequence is that of ATP phosphoribosyltransferase from Pseudomonas putida (strain ATCC 47054 / DSM 6125 / CFBP 8728 / NCIMB 11950 / KT2440).